Here is a 178-residue protein sequence, read N- to C-terminus: uncharacterized protein (178 aa).

A run of 4 helical transmembrane segments spans residues 3–23 (IPII…FISI), 56–76 (IFLM…NLIF), 101–121 (LILP…VAGF), and 150–170 (LSLI…YITP).

This sequence to M.jannaschii MJ0706 and Synechocystis PCC 6803 slr1478.

It is found in the cell membrane. This is an uncharacterized protein from Methanocaldococcus jannaschii (strain ATCC 43067 / DSM 2661 / JAL-1 / JCM 10045 / NBRC 100440) (Methanococcus jannaschii).